The following is a 299-amino-acid chain: Lathosterol oxidase (299 aa).

The next 3 membrane-spanning stretches (helical) occupy residues 32–52 (VSLLVVTNLGAYILYFFCATL), 79–99 (FTVKSLPWISIPTVSLFLLEL), and 117–137 (IHLIMSVISFLFFTDMLIYWI). The Fatty acid hydroxylase domain occupies 124–252 (ISFLFFTDML…YFTLWDRIGG (129 aa)). A Histidine box-1 motif is present at residues 138-143 (HRGLHH). The short motif at 151–155 (HKPHH) is the Histidine box-2 element. Positions 228–233 (HHTDHH) match the Histidine box-3 motif. At S253 the chain carries Phosphoserine.

This sequence belongs to the sterol desaturase family. The cofactor is Fe cation.

It localises to the endoplasmic reticulum membrane. It carries out the reaction a Delta(7)-sterol + 2 Fe(II)-[cytochrome b5] + O2 + 2 H(+) = a Delta(5),Delta(7)-sterol + 2 Fe(III)-[cytochrome b5] + 2 H2O. The enzyme catalyses lathosterol + 2 Fe(II)-[cytochrome b5] + O2 + 2 H(+) = 7-dehydrocholesterol + 2 Fe(III)-[cytochrome b5] + 2 H2O. It catalyses the reaction 5alpha-cholesta-7,24-dien-3beta-ol + 2 Fe(II)-[cytochrome b5] + O2 + 2 H(+) = 7-dehydrodesmosterol + 2 Fe(III)-[cytochrome b5] + 2 H2O. It participates in steroid biosynthesis; cholesterol biosynthesis. Catalyzes the penultimate step of the biosynthesis of cholesterol, the dehydrogenation of lathosterol into 7-dehydrocholesterol (7-DHC). Cholesterol is the major sterol component in mammalian membranes and a precursor for bile acid and steroid hormone synthesis. In addition to its essential role in cholesterol biosynthesis, it also indirectly regulates ferroptosis through the production of 7-DHC. By diverting the spread of damage caused by peroxyl radicals from the phospholipid components to its sterol nucleus, 7-DHC prevents this form of cell death. The polypeptide is Lathosterol oxidase (Rattus norvegicus (Rat)).